The sequence spans 792 residues: Phenylalanine--tRNA ligase beta subunit (792 aa).

The tRNA-binding domain maps to 39-154; the sequence is LYSFASVITA…EATPLGEDLA (116 aa). Residues 403-480 form the B5 domain; it reads RELKEVALRP…ESWNIETQNP (78 aa). The Mg(2+) site is built by D456, D462, E465, and E466. The FDX-ACB domain maps to 695–791; that stretch reads AIYPSSFRDL…LLTDTKGTIN (97 aa).

The protein belongs to the phenylalanyl-tRNA synthetase beta subunit family. Type 1 subfamily. As to quaternary structure, tetramer of two alpha and two beta subunits. Requires Mg(2+) as cofactor.

It localises to the cytoplasm. The catalysed reaction is tRNA(Phe) + L-phenylalanine + ATP = L-phenylalanyl-tRNA(Phe) + AMP + diphosphate + H(+). The polypeptide is Phenylalanine--tRNA ligase beta subunit (pheT) (Chlamydia pneumoniae (Chlamydophila pneumoniae)).